A 116-amino-acid polypeptide reads, in one-letter code: Large ribosomal subunit protein uL18 (116 aa).

Belongs to the universal ribosomal protein uL18 family. In terms of assembly, part of the 50S ribosomal subunit; part of the 5S rRNA/L5/L18/L25 subcomplex. Contacts the 5S and 23S rRNAs.

Its function is as follows. This is one of the proteins that bind and probably mediate the attachment of the 5S RNA into the large ribosomal subunit, where it forms part of the central protuberance. The sequence is that of Large ribosomal subunit protein uL18 from Shewanella oneidensis (strain ATCC 700550 / JCM 31522 / CIP 106686 / LMG 19005 / NCIMB 14063 / MR-1).